The sequence spans 139 residues: ATP synthase epsilon chain (139 aa).

Belongs to the ATPase epsilon chain family. As to quaternary structure, F-type ATPases have 2 components, CF(1) - the catalytic core - and CF(0) - the membrane proton channel. CF(1) has five subunits: alpha(3), beta(3), gamma(1), delta(1), epsilon(1). CF(0) has three main subunits: a, b and c.

It localises to the cell inner membrane. Produces ATP from ADP in the presence of a proton gradient across the membrane. This is ATP synthase epsilon chain from Acinetobacter baumannii (strain SDF).